Consider the following 318-residue polypeptide: Methionine import ATP-binding protein MetN (318 aa).

One can recognise an ABC transporter domain in the interval 2–237 (IEIKDVGKIF…PEGELKKIIE (236 aa)). 34–41 (GRSGAGKS) provides a ligand contact to ATP.

The protein belongs to the ABC transporter superfamily. Methionine importer (TC 3.A.1.24) family. In terms of assembly, the complex is composed of two ATP-binding proteins (MetN), two transmembrane proteins (MetI) and a solute-binding protein (MetQ).

The protein localises to the cell membrane. It carries out the reaction L-methionine(out) + ATP + H2O = L-methionine(in) + ADP + phosphate + H(+). It catalyses the reaction D-methionine(out) + ATP + H2O = D-methionine(in) + ADP + phosphate + H(+). In terms of biological role, part of the ABC transporter complex MetNIQ involved in methionine import. Responsible for energy coupling to the transport system. This Clostridium tetani (strain Massachusetts / E88) protein is Methionine import ATP-binding protein MetN.